A 63-amino-acid polypeptide reads, in one-letter code: DNA gyrase inhibitor YacG (63 aa).

Positions 10, 13, 29, and 33 each coordinate Zn(2+).

This sequence belongs to the DNA gyrase inhibitor YacG family. Interacts with GyrB. Zn(2+) is required as a cofactor.

Its function is as follows. Inhibits all the catalytic activities of DNA gyrase by preventing its interaction with DNA. Acts by binding directly to the C-terminal domain of GyrB, which probably disrupts DNA binding by the gyrase. This is DNA gyrase inhibitor YacG from Chromobacterium violaceum (strain ATCC 12472 / DSM 30191 / JCM 1249 / CCUG 213 / NBRC 12614 / NCIMB 9131 / NCTC 9757 / MK).